A 79-amino-acid chain; its full sequence is Acyl carrier protein (79 aa).

Residues 1–76 (MSLEDDVIAI…DVFTYIKKRQ (76 aa)) form the Carrier domain. An O-(pantetheine 4'-phosphoryl)serine modification is found at Ser36.

Belongs to the acyl carrier protein (ACP) family. 4'-phosphopantetheine is transferred from CoA to a specific serine of apo-ACP by AcpS. This modification is essential for activity because fatty acids are bound in thioester linkage to the sulfhydryl of the prosthetic group.

It localises to the cytoplasm. The protein operates within lipid metabolism; fatty acid biosynthesis. Its function is as follows. Carrier of the growing fatty acid chain in fatty acid biosynthesis. The sequence is that of Acyl carrier protein from Chlamydia pneumoniae (Chlamydophila pneumoniae).